We begin with the raw amino-acid sequence, 218 residues long: Small ribosomal subunit protein uS3c (218 aa).

Residues 47–118 form the KH type-2 domain; that stretch reads VYKNIRNSSN…KLRMTLTEVT (72 aa).

This sequence belongs to the universal ribosomal protein uS3 family. Part of the 30S ribosomal subunit.

It localises to the plastid. The protein localises to the chloroplast. The sequence is that of Small ribosomal subunit protein uS3c (rps3) from Physcomitrium patens (Spreading-leaved earth moss).